The chain runs to 1106 residues: GYF domain-containing protein gyf-1 (1106 aa).

The segment covering 1-17 (MSSVSSAEPTAQQNFNP) has biased composition (polar residues). Disordered regions lie at residues 1–50 (MSSV…GGFD), 160–370 (GALQ…DSTV), and 383–434 (KAST…SAWS). A compositionally biased stretch (low complexity) spans 30 to 42 (RGGSISSGNNRSS). The span at 162–180 (LQNGQSPTSRWAPKSSWNK) shows a compositional bias: polar residues. Over residues 207–224 (GRGGGRIGGENGFGGATN) the composition is skewed to gly residues. Polar residues predominate over residues 229-243 (AAQNEDSPGTYQSKF). Gly residues predominate over residues 248-261 (RGGGAGSVGRGGST). Polar residues predominate over residues 306 to 322 (VGSTSRTSTNAAPQSSE). Low complexity-rich tracts occupy residues 334–353 (QRTQ…QQAQ) and 390–410 (PPQQ…APSR). Positions 459–508 (PVQFYYMDPTETRRGPFPKDQMNVWFKAGYFTDESLRVQRGENGEYKTIG) constitute a GYF domain. Positions 584-746 (LDDHNRRLAE…ERKRAAERER (163 aa)) form a coiled coil. 4 disordered regions span residues 778–811 (AFTG…KTAP), 909–928 (KNSQ…SAKV), 1026–1076 (AGGR…DGNI), and 1087–1106 (RLNK…PSRR). Over residues 786-801 (VSPSGSEESDEWISTS) the composition is skewed to polar residues. Low complexity predominate over residues 1046 to 1057 (SDSNSGSNSNSG).

In Caenorhabditis elegans, this protein is GYF domain-containing protein gyf-1.